Reading from the N-terminus, the 203-residue chain is Large ribosomal subunit protein uL13 (203 aa).

An N-acetylalanine modification is found at Ala2. At Arg59 the chain carries Citrulline. Ser77 carries the phosphoserine modification. The residue at position 140 (Arg140) is a Citrulline. Lys191 is modified (N6-acetyllysine).

It belongs to the universal ribosomal protein uL13 family. As to quaternary structure, component of the 60S ribosome. Component of the GAIT complex. Interacts with EIF4G1. In terms of processing, phosphorylation at Ser-77 upon interferon-gamma treatment in macrophages involves a DAPK1-DAPK3 kinase cascade and is causing release from the ribosome, association with the GAIT complex and subsequent involvement in transcript-selective translation inhibition. Post-translationally, citrullinated by PADI4.

The protein resides in the cytoplasm. In terms of biological role, associated with ribosomes but is not required for canonical ribosome function and has extra-ribosomal functions. Component of the GAIT (gamma interferon-activated inhibitor of translation) complex which mediates interferon-gamma-induced transcript-selective translation inhibition in inflammation processes. Upon interferon-gamma activation and subsequent phosphorylation dissociates from the ribosome and assembles into the GAIT complex which binds to stem loop-containing GAIT elements in the 3'-UTR of diverse inflammatory mRNAs (such as ceruplasmin) and suppresses their translation. In the GAIT complex interacts with m7G cap-bound eIF4G at or near the eIF3-binding site and blocks the recruitment of the 43S ribosomal complex. Involved in methylation of rRNA. The polypeptide is Large ribosomal subunit protein uL13 (Rpl13a) (Rattus norvegicus (Rat)).